Reading from the N-terminus, the 235-residue chain is Thymidylate kinase (235 aa).

Residue 10-17 participates in ATP binding; sequence GINGVEKS.

The protein belongs to the thymidylate kinase family.

The catalysed reaction is dTMP + ATP = dTDP + ADP. It functions in the pathway pyrimidine metabolism; dTTP biosynthesis. Functionally, catalyzes the conversion of dTMP to dTDP. The sequence is that of Thymidylate kinase (TMK) from African swine fever virus (isolate Pig/Kenya/KEN-50/1950) (ASFV).